The sequence spans 137 residues: Probable S-adenosyl-L-methionine-binding protein MTH_1797 (137 aa).

The 130-residue stretch at Ile8–Phe137 folds into the TsaA-like domain. S-adenosyl-L-methionine is bound by residues Pro25–Gln27, His63–Leu64, Arg87, Leu97, and Leu117–Ser120.

Belongs to the tRNA methyltransferase O family.

In Methanothermobacter thermautotrophicus (strain ATCC 29096 / DSM 1053 / JCM 10044 / NBRC 100330 / Delta H) (Methanobacterium thermoautotrophicum), this protein is Probable S-adenosyl-L-methionine-binding protein MTH_1797.